Here is a 1072-residue protein sequence, read N- to C-terminus: Carbamoyl phosphate synthase large chain (1072 aa).

The tract at residues methionine 1–glutamate 401 is carboxyphosphate synthetic domain. Positions 129, 169, 175, 176, 208, 210, 215, 241, 242, 243, 284, and 298 each coordinate ATP. The region spanning arginine 133 to valine 327 is the ATP-grasp 1 domain. Positions 284, 298, and 300 each coordinate Mg(2+). Mn(2+)-binding residues include glutamine 284, glutamate 298, and asparagine 300. The tract at residues leucine 402 to serine 546 is oligomerization domain. The segment at isoleucine 547 to glycine 929 is carbamoyl phosphate synthetic domain. In terms of domain architecture, ATP-grasp 2 spans glutamate 671–leucine 861. Residues arginine 707, arginine 746, glutamate 752, glycine 777, valine 778, histidine 779, serine 780, glutamine 820, and glutamate 832 each contribute to the ATP site. Mg(2+)-binding residues include glutamine 820, glutamate 832, and asparagine 834. 3 residues coordinate Mn(2+): glutamine 820, glutamate 832, and asparagine 834. Residues isoleucine 930 to alanine 1072 enclose the MGS-like domain. Residues isoleucine 930–alanine 1072 are allosteric domain.

Belongs to the CarB family. Composed of two chains; the small (or glutamine) chain promotes the hydrolysis of glutamine to ammonia, which is used by the large (or ammonia) chain to synthesize carbamoyl phosphate. Tetramer of heterodimers (alpha,beta)4. Mg(2+) is required as a cofactor. The cofactor is Mn(2+).

It carries out the reaction hydrogencarbonate + L-glutamine + 2 ATP + H2O = carbamoyl phosphate + L-glutamate + 2 ADP + phosphate + 2 H(+). The enzyme catalyses hydrogencarbonate + NH4(+) + 2 ATP = carbamoyl phosphate + 2 ADP + phosphate + 2 H(+). It functions in the pathway amino-acid biosynthesis; L-arginine biosynthesis; carbamoyl phosphate from bicarbonate: step 1/1. It participates in pyrimidine metabolism; UMP biosynthesis via de novo pathway; (S)-dihydroorotate from bicarbonate: step 1/3. Its function is as follows. Large subunit of the glutamine-dependent carbamoyl phosphate synthetase (CPSase). CPSase catalyzes the formation of carbamoyl phosphate from the ammonia moiety of glutamine, carbonate, and phosphate donated by ATP, constituting the first step of 2 biosynthetic pathways, one leading to arginine and/or urea and the other to pyrimidine nucleotides. The large subunit (synthetase) binds the substrates ammonia (free or transferred from glutamine from the small subunit), hydrogencarbonate and ATP and carries out an ATP-coupled ligase reaction, activating hydrogencarbonate by forming carboxy phosphate which reacts with ammonia to form carbamoyl phosphate. This chain is Carbamoyl phosphate synthase large chain, found in Bacillus cereus (strain ATCC 10987 / NRS 248).